Consider the following 279-residue polypeptide: Probable thymidylate synthase (279 aa).

DUMP is bound by residues R21 and 136-137; that span reads RR. C156 acts as the Nucleophile in catalysis. DUMP is bound by residues 177–180, N188, and 218–220; these read RSVD and HIY. D180 lines the (6R)-5,10-methylene-5,6,7,8-tetrahydrofolate pocket.

It belongs to the thymidylate synthase family.

The enzyme catalyses dUMP + (6R)-5,10-methylene-5,6,7,8-tetrahydrofolate = 7,8-dihydrofolate + dTMP. Its function is as follows. Sythesizes the thymine necessary for the viral DNA replication. The protein is Probable thymidylate synthase of Escherichia coli (Enterobacteria phage T5).